The following is a 1651-amino-acid chain: Putative serine/threonine-protein kinase/receptor R818 (1651 aa).

A signal peptide spans 1-19 (MKSIGIFVVALWLTHFCDG). Residues Asn111, Asn135, Asn190, Asn236, Asn275, Asn276, Asn287, Asn452, Asn455, Asn477, Asn495, Asn540, Asn596, and Asn722 are each glycosylated (N-linked (GlcNAc...) asparagine; by host). A helical transmembrane segment spans residues 749–769 (IILAIVIPVSFVICCIIIVLV). One can recognise a Protein kinase 1 domain in the interval 793–1057 (LDFMESLGSG…EIMTKLSTLI (265 aa)). ATP contacts are provided by residues 799 to 807 (LGSGGSGEV) and Lys820. Catalysis depends on Asp915, which acts as the Proton acceptor. A disordered region spans residues 1089 to 1115 (IHNNDETKNSFGSTTYGSNTISSSSNT). Over residues 1100–1115 (GSTTYGSNTISSSSNT) the composition is skewed to low complexity. The region spanning 1135-1278 (IIVFTDIISA…VTVNIAAKIT (144 aa)) is the Guanylate cyclase domain. Residues 1394–1645 (IQIGKQIGVG…DVIMGLNDML (252 aa)) form the Protein kinase 2 domain. ATP is bound by residues 1400 to 1408 (IGVGSYGIV) and Lys1421. Asp1515 acts as the Proton acceptor in catalysis.

It localises to the membrane. The enzyme catalyses L-seryl-[protein] + ATP = O-phospho-L-seryl-[protein] + ADP + H(+). It catalyses the reaction L-threonyl-[protein] + ATP = O-phospho-L-threonyl-[protein] + ADP + H(+). The polypeptide is Putative serine/threonine-protein kinase/receptor R818 (Acanthamoeba polyphaga mimivirus (APMV)).